The following is a 194-amino-acid chain: Peptidyl-tRNA hydrolase (194 aa).

Y17 is a tRNA binding site. The Proton acceptor role is filled by H22. Positions 68, 70, and 116 each coordinate tRNA.

Belongs to the PTH family. Monomer.

The protein localises to the cytoplasm. The enzyme catalyses an N-acyl-L-alpha-aminoacyl-tRNA + H2O = an N-acyl-L-amino acid + a tRNA + H(+). Functionally, hydrolyzes ribosome-free peptidyl-tRNAs (with 1 or more amino acids incorporated), which drop off the ribosome during protein synthesis, or as a result of ribosome stalling. In terms of biological role, catalyzes the release of premature peptidyl moieties from peptidyl-tRNA molecules trapped in stalled 50S ribosomal subunits, and thus maintains levels of free tRNAs and 50S ribosomes. This is Peptidyl-tRNA hydrolase from Pseudomonas fluorescens (strain SBW25).